The following is a 98-amino-acid chain: NADH-ubiquinone oxidoreductase chain 4L (98 aa).

A run of 3 helical transmembrane segments spans residues proline 2 to phenylalanine 22, serine 29 to leucine 49, and isoleucine 61 to valine 81.

It belongs to the complex I subunit 4L family. In terms of assembly, core subunit of respiratory chain NADH dehydrogenase (Complex I) which is composed of 45 different subunits.

Its subcellular location is the mitochondrion inner membrane. The enzyme catalyses a ubiquinone + NADH + 5 H(+)(in) = a ubiquinol + NAD(+) + 4 H(+)(out). Its function is as follows. Core subunit of the mitochondrial membrane respiratory chain NADH dehydrogenase (Complex I) which catalyzes electron transfer from NADH through the respiratory chain, using ubiquinone as an electron acceptor. Part of the enzyme membrane arm which is embedded in the lipid bilayer and involved in proton translocation. The protein is NADH-ubiquinone oxidoreductase chain 4L (MT-ND4L) of Avahi laniger (Eastern woolly lemur).